We begin with the raw amino-acid sequence, 182 residues long: Dual-action ribosomal maturation protein DarP (182 aa).

This sequence belongs to the DarP family.

It localises to the cytoplasm. Functionally, member of a network of 50S ribosomal subunit biogenesis factors which assembles along the 30S-50S interface, preventing incorrect 23S rRNA structures from forming. Promotes peptidyl transferase center (PTC) maturation. The chain is Dual-action ribosomal maturation protein DarP from Yersinia pseudotuberculosis serotype O:1b (strain IP 31758).